We begin with the raw amino-acid sequence, 211 residues long: tRNA (guanine-N(7)-)-methyltransferase (211 aa).

S-adenosyl-L-methionine-binding residues include Glu44, Asp69, Asp96, and Asp118. Asp118 is an active-site residue. Lys122 is a binding site for substrate. The interaction with RNA stretch occupies residues Lys124–Arg129. Substrate contacts are provided by residues Asp154 and Thr191–Glu194.

Belongs to the class I-like SAM-binding methyltransferase superfamily. TrmB family.

The catalysed reaction is guanosine(46) in tRNA + S-adenosyl-L-methionine = N(7)-methylguanosine(46) in tRNA + S-adenosyl-L-homocysteine. It functions in the pathway tRNA modification; N(7)-methylguanine-tRNA biosynthesis. Its function is as follows. Catalyzes the formation of N(7)-methylguanine at position 46 (m7G46) in tRNA. This is tRNA (guanine-N(7)-)-methyltransferase from Streptococcus pyogenes serotype M18 (strain MGAS8232).